The chain runs to 354 residues: Guanine nucleotide-binding protein G(i) subunit alpha (354 aa).

Residue Gly2 is the site of N-myristoyl glycine attachment. Cys3 carries the S-palmitoyl cysteine lipid modification. A G-alpha domain is found at 32–354; the sequence is REVKLLLLGA…KNNLKDCGLF (323 aa). The tract at residues 35–48 is G1 motif; that stretch reads KLLLLGAGESGKST. GTP contacts are provided by residues 40 to 47, 175 to 181, 200 to 204, 269 to 272, and Ala326; these read GAGESGKS, LRTRVKT, DVGGQ, and NKKD. Mg(2+) contacts are provided by Ser47 and Thr181. Residues 173–181 are G2 motif; that stretch reads DVLRTRVKT. A G3 motif region spans residues 196–205; that stretch reads FKMFDVGGQR. The G4 motif stretch occupies residues 265–272; sequence ILFLNKKD. Positions 324–329 are G5 motif; sequence TCATDT.

Belongs to the G-alpha family. G(i/o/t/z) subfamily. G proteins are composed of 3 units; alpha, beta and gamma. The alpha chain contains the guanine nucleotide binding site.

Functionally, guanine nucleotide-binding proteins (G proteins) are involved as modulators or transducers in various transmembrane signaling systems. This G protein is involved in 1-methyladenine-induced oocyte maturation. The sequence is that of Guanine nucleotide-binding protein G(i) subunit alpha from Patiria pectinifera (Starfish).